The following is a 409-amino-acid chain: Putative lipoate-protein ligase A (409 aa).

Positions 146 to 330 constitute a BPL/LPL catalytic domain; that stretch reads GPDNCRLLFY…RFQKTFKVDG (185 aa). ATP-binding positions include R188, 193-196, and K249; that span reads GTVL. K249 lines the (R)-lipoate pocket.

It belongs to the LplA family. As to quaternary structure, monomer.

The enzyme catalyses L-lysyl-[lipoyl-carrier protein] + (R)-lipoate + ATP = N(6)-[(R)-lipoyl]-L-lysyl-[lipoyl-carrier protein] + AMP + diphosphate + H(+). It functions in the pathway protein modification; protein lipoylation via exogenous pathway; protein N(6)-(lipoyl)lysine from lipoate: step 1/2. The protein operates within protein modification; protein lipoylation via exogenous pathway; protein N(6)-(lipoyl)lysine from lipoate: step 2/2. Its function is as follows. Catalyzes both the ATP-dependent activation of exogenously supplied lipoate to lipoyl-AMP and the transfer of the activated lipoyl onto the lipoyl domains of lipoate-dependent enzymes. In Saccharomyces cerevisiae (strain ATCC 204508 / S288c) (Baker's yeast), this protein is Putative lipoate-protein ligase A (AIM22).